A 130-amino-acid polypeptide reads, in one-letter code: Lysozyme C (130 aa).

Residues 1 to 130 (KIYERCELAR…LTPYIRGCGV (130 aa)) form the C-type lysozyme domain. 4 cysteine pairs are disulfide-bonded: Cys-6–Cys-128, Cys-30–Cys-116, Cys-65–Cys-81, and Cys-77–Cys-95. Catalysis depends on residues Glu-35 and Asp-53.

Belongs to the glycosyl hydrolase 22 family. Monomer.

The protein localises to the secreted. The catalysed reaction is Hydrolysis of (1-&gt;4)-beta-linkages between N-acetylmuramic acid and N-acetyl-D-glucosamine residues in a peptidoglycan and between N-acetyl-D-glucosamine residues in chitodextrins.. In terms of biological role, lysozymes have primarily a bacteriolytic function; those in tissues and body fluids are associated with the monocyte-macrophage system and enhance the activity of immunoagents. In Oryctolagus cuniculus (Rabbit), this protein is Lysozyme C (LYZ).